Here is a 147-residue protein sequence, read N- to C-terminus: Prefoldin subunit alpha (147 aa).

It belongs to the prefoldin alpha subunit family. As to quaternary structure, heterohexamer of two alpha and four beta subunits.

It localises to the cytoplasm. Functionally, molecular chaperone capable of stabilizing a range of proteins. Seems to fulfill an ATP-independent, HSP70-like function in archaeal de novo protein folding. The protein is Prefoldin subunit alpha of Saccharolobus islandicus (strain Y.N.15.51 / Yellowstone #2) (Sulfolobus islandicus).